Here is a 327-residue protein sequence, read N- to C-terminus: MSKTIQANNIEALGNAMDLALERDPNVVLYGQDAGFEGGVFRATKGLQKKYGEERVWDCPIAEAAMAGIGVGAAIGGLKPIVEIQFSGFSFPAMFQIFTHAARIRNRSRGVYTCPIIVRMPMGGGIKALEHHSETLEAIYGQIAGLKTVMPSNPYDTKGLFLAAVESPDPVVFFEPKKLYRAFRQEIPADYYTVPIGQANLISQGNNLTIVSYGPTMFDLINMVYGGELKDKGIELIDLRTISPWDKETVFNSVKKTGRLLVVTEAAKTFTTSGEIIASVTEELFSYLKAAPQRVTGWDIVVPLARGEHYQFNLNARILEAVNQLLK.

Glu-63 is a thiamine diphosphate binding site.

Heterodimer of an alpha and a beta chain. The cofactor is thiamine diphosphate.

The catalysed reaction is N(6)-[(R)-lipoyl]-L-lysyl-[protein] + pyruvate + H(+) = N(6)-[(R)-S(8)-acetyldihydrolipoyl]-L-lysyl-[protein] + CO2. Functionally, the pyruvate dehydrogenase complex catalyzes the overall conversion of pyruvate to acetyl-CoA and CO(2). It contains multiple copies of three enzymatic components: pyruvate dehydrogenase (E1), dihydrolipoamide acetyltransferase (E2) and lipoamide dehydrogenase (E3). The protein is Pyruvate dehydrogenase E1 component subunit beta (pdhB) of Mycoplasma pneumoniae (strain ATCC 29342 / M129 / Subtype 1) (Mycoplasmoides pneumoniae).